Consider the following 363-residue polypeptide: uncharacterized protein (363 aa).

An N-terminal signal peptide occupies residues 1-20; the sequence is MKRAPLITGLLLISTSCAYA.

The protein belongs to the fimbrial protein family.

The protein localises to the fimbrium. Functionally, part of the yraHIJK fimbrial operon. Could contribute to adhesion to various surfaces in specific environmental niches. Increases adhesion to eukaryotic T24 bladder epithelial cells in the absence of fim operon. This is an uncharacterized protein from Escherichia coli (strain K12).